The primary structure comprises 345 residues: cAMP-responsive element modulator (345 aa).

Residues V88–G147 enclose the KID domain. Phosphoserine is present on residues S102, S129, S271, S274, and S277. Residues T286–Y345 form the bZIP domain. The tract at residues R287 to K312 is basic motif. The tract at residues L314–L335 is leucine-zipper.

It belongs to the bZIP family. As to quaternary structure, binds DNA as a dimer. Interacts with FHL5. Interacts with CDC34. May interact with TSSK4. Isoform 9 is ubiquitinated by CDC34 and RAD6B in order to be degraded by the proteasome. Post-translationally, stimulated by phosphorylation. Phosphorylated on Ser-116 by TSSK4 in vitro. Expressed in testes (round spermatids) (at protein level). Isoform 14 is the major activator form in testes.

The protein resides in the nucleus. It localises to the cytoplasm. Transcriptional regulator that binds the cAMP response element (CRE), a sequence present in many viral and cellular promoters. Isoforms are either transcriptional activators or repressors. Plays a role in spermatogenesis and is involved in spermatid maturation. Functionally, may play a role in the regulation of the circadian clock: acts as a transcriptional repressor of the core circadian component PER1 by directly binding to cAMP response elements in its promoter. The polypeptide is cAMP-responsive element modulator (Homo sapiens (Human)).